Here is a 361-residue protein sequence, read N- to C-terminus: D-alanine--D-alanine ligase (361 aa).

In terms of domain architecture, ATP-grasp spans 144-350; the sequence is KLCVSEAGIA…FPELCDRLLQ (207 aa). 177–232 provides a ligand contact to ATP; sequence PETLIYPVFVKPAHLGSSVGISKVSVQGELPEALAHACNLDTKVLIEQAMHGKEIE. Residues Asp-303, Glu-317, and Asn-319 each contribute to the Mg(2+) site.

The protein belongs to the D-alanine--D-alanine ligase family. Mg(2+) serves as cofactor. It depends on Mn(2+) as a cofactor.

The protein resides in the cytoplasm. It carries out the reaction 2 D-alanine + ATP = D-alanyl-D-alanine + ADP + phosphate + H(+). Its pathway is cell wall biogenesis; peptidoglycan biosynthesis. Cell wall formation. The sequence is that of D-alanine--D-alanine ligase from Chlorobium phaeovibrioides (strain DSM 265 / 1930) (Prosthecochloris vibrioformis (strain DSM 265)).